The primary structure comprises 380 residues: Acyl-coenzyme A diphosphatase SCS3 (380 aa).

At Met1 to Asn7 the chain is on the cytoplasmic side. The chain crosses the membrane as a helical span at residues Ala8–Gly28. Topologically, residues Tyr29–Val43 are lumenal. A helical transmembrane segment spans residues Asn44–Ile64. At Arg65–Ala88 the chain is on the cytoplasmic side. A helical membrane pass occupies residues Ile89 to Met109. The Lumenal segment spans residues Asp110–Ser233. The chain crosses the membrane as a helical span at residues Gly234–Gly254. His235 is an active-site residue. Topologically, residues Arg255–Pro325 are cytoplasmic. A helical transmembrane segment spans residues Val326 to Ala346. The Lumenal portion of the chain corresponds to Ser347–Met356. His350 is a catalytic residue. The chain crosses the membrane as a helical span at residues Ser357–Leu377. Residues Arg378 to Val380 lie on the Cytoplasmic side of the membrane.

It belongs to the FIT family. Fungal FIT2B/SCS3 subfamily.

Its subcellular location is the endoplasmic reticulum membrane. It carries out the reaction an acyl-CoA + H2O = an acyl-4'-phosphopantetheine + adenosine 3',5'-bisphosphate + 2 H(+). It catalyses the reaction (9Z)-octadecenoyl-CoA + H2O = S-(9Z-octadecenoyl)-4'-phosphopantetheine + adenosine 3',5'-bisphosphate + 2 H(+). The enzyme catalyses (5Z,8Z,11Z,14Z)-eicosatetraenoyl-CoA + H2O = S-(5Z,8Z,11Z,14Z-eicosatetraenoyl)-4'-phosphopantetheine + adenosine 3',5'-bisphosphate + 2 H(+). The catalysed reaction is hexadecanoyl-CoA + H2O = S-hexadecanoyl-4'-phosphopantetheine + adenosine 3',5'-bisphosphate + 2 H(+). Its function is as follows. Fatty acyl-coenzyme A (CoA) diphosphatase that hydrolyzes fatty acyl-CoA to yield acyl-4'-phosphopantetheine and adenosine 3',5'-bisphosphate. Preferentially hydrolyzes unsaturated long-chain acyl-CoA substrates in the endoplasmic reticulum (ER) lumen. This catalytic activity is required for maintaining ER structure and for lipid droplets (LDs) biogenesis, which are lipid storage organelles involved in maintaining lipid and energy homeostasis. May directly bind to diacylglycerol (DAGs) and triacylglycerol, which is also important for LD biogenesis. May support directional budding of nacent LDs from the ER into the cytosol by reducing DAG levels at sites of LD formation. May play a role in the regulation of cell morphology and cytoskeletal organization. Involved in phospholipid biosynthesis. The sequence is that of Acyl-coenzyme A diphosphatase SCS3 from Saccharomyces cerevisiae (strain ATCC 204508 / S288c) (Baker's yeast).